A 111-amino-acid chain; its full sequence is Cytochrome c-550 (111 aa).

4 residues coordinate heme c: Cys13, Cys16, His17, and Met90.

Binds 1 heme c group covalently per subunit.

The polypeptide is Cytochrome c-550 (Novispirillum itersonii (Aquaspirillum itersonii)).